Here is a 147-residue protein sequence, read N- to C-terminus: Hemoglobin subunit delta (147 aa).

In terms of domain architecture, Globin spans 3–147 (HLTGEEKAAV…VANALAHKYH (145 aa)). 2 residues coordinate heme b: histidine 64 and histidine 93.

Belongs to the globin family. In terms of assembly, heterotetramer of two delta chains and two alpha chains. In terms of tissue distribution, red blood cells.

The sequence is that of Hemoglobin subunit delta (HBD) from Ailuropoda melanoleuca (Giant panda).